A 316-amino-acid polypeptide reads, in one-letter code: Long form salivary protein D7L1 (316 aa).

The N-terminal stretch at M1–G23 is a signal peptide. Cystine bridges form between C40–C76, C72–C131, C181–C214, and C255–C266.

The protein belongs to the PBP/GOBP family.

It is found in the secreted. Its function is as follows. Modulates blood feeding of female mosquitoes on vertebrate species by binding and sequestering different mediators involved in the host response, such as biogenic amines and eicosanoids. Binds serotonin, tryptamine, histamine, leukotriene C4, leukotriene D4 and leukotriene E4. Does not bind octopamine, dopamine, noradrenaline, adrenaline and prostaglandin PGF2alpha. The sequence is that of Long form salivary protein D7L1 from Anopheles atroparvus (European mosquito).